The sequence spans 140 residues: uncharacterized protein (140 aa).

A run of 4 helical transmembrane segments spans residues 4-24 (LLLAGWIFFILLSVCTESFSG), 56-76 (EAFIQKIGHAFSFFVLTYLLW), 84-104 (SAAAGSFAFAFFTEVLQLFFS), and 109-129 (IRDVLIDAVGIGLFYGLYVLA).

Its subcellular location is the cell membrane. Functionally, may be important for peptidoglycan remodeling. This is an uncharacterized protein from Bacillus subtilis (strain 168).